We begin with the raw amino-acid sequence, 433 residues long: MDRKTRLSEPPTLALRLKPYKTAIQQLRSVIRALKENTTVTFLPTPSLILQTVRSHCVSKITFNSSCLYITDKSFQPKTINNSTPLLGNFMYLTSSKDLTKFYVQDISDLSAKISMCAPDFNMEFSSACVHGQDIVRESENSAVHVDLDFGVVADLLKWIGPHTRVKRNVKKAPCPTGTVQILVHAGPPAIKFILTNGSELEFTANNRVSFHGVKNMRINVQLKNFYQTLLNCAVTKLPCTLRIVTEHDTLLYVASRNGLFAVENFLTEEPFQRGDPFDKNYVGNSGKSRGGGGGGGSLSSLANAGGLHDDGPGLDNDLMNEPMGLGGLGGGGGGGGKKHDRGGGGGSGTRKMSSGGGGGDHDHGLSSKEKYEQHKITSYLTSKGGSGGGGGGGGGGLDRNSGNYFNDAKEESDSEDSVTFEFVPNTKKQKCG.

The segment at 274–433 (RGDPFDKNYV…VPNTKKQKCG (160 aa)) is disordered. Gly residues-rich tracts occupy residues 289 to 298 (SRGGGGGGGS), 325 to 336 (GLGGLGGGGGGG), and 344 to 359 (GGGG…GGGG). Residues 360-376 (GDHDHGLSSKEKYEQHK) show a composition bias toward basic and acidic residues. Over residues 385-398 (GGSGGGGGGGGGGL) the composition is skewed to gly residues. K410 is covalently cross-linked (Glycyl lysine isopeptide (Lys-Gly) (interchain with G-Cter in host SUMO1)). Residues S413, S415, and S418 each carry the phosphoserine modification.

Belongs to the herpesviridae polymerase accessory protein family. In terms of assembly, forms homodimers. Interacts with host SMARCB1. Interacts with host NCL/nucleolin; this interaction is important for the organization of proteins within viral replication compartments. Interacts with UL112/UL113; this interaction is necessary for efficient viral DNA replication. Interacts with UL84. Interacts with the uracil DNA glycosylase UL114. Interacts with the DNA polymerase catalytic subunit UL54. Interacts with host IRF3. Interacts with host RELA. Post-translationally, phosphorylated by UL97 on serine residues, phosphorylation seems important for UL44 nuclear entry but does not directly affect its role in replication. Sumoylated. Sumoylation on Lys-410 increases viral DNA replication.

It is found in the virion. Its subcellular location is the host nucleus. In terms of biological role, accessory subunit of the DNA polymerase that plays an essential role in viral DNA replication and acts by increasing the processivity of polymerization. Forms dimers that binds to double-stranded DNA and UL54 specifically to stimulates long chain DNA synthesis efficiently. Plays an important role in maintaining the structure of viral replication compartments by interacting with host nucleolin/NUC. In addition, suppresses innate immune responses through effects on host IRF3 and NF-kappa-B. Mechanistically, interfere with the binding of IRF3 and the p65 NF-kappa-B subunit to the promoters of antiviral genes, thereby inhibiting the expression of these genes. This chain is DNA polymerase processivity factor (UL44), found in Homo sapiens (Human).